The chain runs to 307 residues: GTPase Era (307 aa).

The 170-residue stretch at 17–186 (RCGFVAIVGR…LELLKPYLPE (170 aa)) folds into the Era-type G domain. Residues 25–32 (GRPNVGKS) are G1. GTP is bound at residue 25–32 (GRPNVGKS). Positions 51–55 (QTTRN) are G2. The tract at residues 72 to 75 (DTPG) is G3. Residues 72 to 76 (DTPGF) and 133 to 136 (NKID) each bind GTP. The G4 stretch occupies residues 133 to 136 (NKID). The tract at residues 165–167 (VSA) is G5. The KH type-2 domain maps to 217–293 (LGEELPYAMN…FLKVWVKVKS (77 aa)).

It belongs to the TRAFAC class TrmE-Era-EngA-EngB-Septin-like GTPase superfamily. Era GTPase family. Monomer.

The protein resides in the cytoplasm. It is found in the cell inner membrane. An essential GTPase that binds both GDP and GTP, with rapid nucleotide exchange. Plays a role in 16S rRNA processing and 30S ribosomal subunit biogenesis and possibly also in cell cycle regulation and energy metabolism. This chain is GTPase Era, found in Neisseria meningitidis serogroup C / serotype 2a (strain ATCC 700532 / DSM 15464 / FAM18).